The primary structure comprises 102 residues: Putative pterin-4-alpha-carbinolamine dehydratase (102 aa).

The protein belongs to the pterin-4-alpha-carbinolamine dehydratase family.

It catalyses the reaction (4aS,6R)-4a-hydroxy-L-erythro-5,6,7,8-tetrahydrobiopterin = (6R)-L-erythro-6,7-dihydrobiopterin + H2O. The polypeptide is Putative pterin-4-alpha-carbinolamine dehydratase (Burkholderia ambifaria (strain ATCC BAA-244 / DSM 16087 / CCUG 44356 / LMG 19182 / AMMD) (Burkholderia cepacia (strain AMMD))).